The chain runs to 125 residues: uncharacterized protein (125 aa).

The span at 1–33 (MLPHQNSSYTRQGTNDAQANDMRSPSQLPTSVN) shows a compositional bias: polar residues. Disordered regions lie at residues 1–35 (MLPHQNSSYTRQGTNDAQANDMRSPSQLPTSVNIE) and 44–63 (SEKLNTPMHNRSRSGIKKHT). Residues 53–63 (NRSRSGIKKHT) are compositionally biased toward basic residues.

This is an uncharacterized protein from Schizosaccharomyces pombe (strain 972 / ATCC 24843) (Fission yeast).